The primary structure comprises 1058 residues: Carbamoyl phosphate synthase large chain (1058 aa).

The interval 1–401 (MPKRTDIQKI…SLLKACRSLE (401 aa)) is carboxyphosphate synthetic domain. Residues R129, R169, G175, G176, R208, I210, E215, G241, I242, H243, Q284, and E298 each contribute to the ATP site. One can recognise an ATP-grasp 1 domain in the interval 133 to 327 (KQLMEELEQP…IAKLAAKIAV (195 aa)). Mg(2+) is bound by residues Q284, E298, and N300. Mn(2+) contacts are provided by Q284, E298, and N300. The tract at residues 402-546 (IGVHHNEIPE…YSTYGWENES (145 aa)) is oligomerization domain. The carbamoyl phosphate synthetic domain stretch occupies residues 547–929 (IKSDKESVLV…ALYKAFEASY (383 aa)). Positions 671–861 (EQALKELDIP…MAQVATKLIL (191 aa)) constitute an ATP-grasp 2 domain. ATP is bound by residues R707, S746, I748, E752, G777, V778, H779, S780, Q820, and E832. Positions 820, 832, and 834 each coordinate Mg(2+). Mn(2+) contacts are provided by Q820, E832, and N834. The region spanning 930 to 1058 (LHLPTFGNVV…ESRSFVTEAI (129 aa)) is the MGS-like domain. The interval 930 to 1058 (LHLPTFGNVV…ESRSFVTEAI (129 aa)) is allosteric domain.

It belongs to the CarB family. In terms of assembly, composed of two chains; the small (or glutamine) chain promotes the hydrolysis of glutamine to ammonia, which is used by the large (or ammonia) chain to synthesize carbamoyl phosphate. Tetramer of heterodimers (alpha,beta)4. The cofactor is Mg(2+). It depends on Mn(2+) as a cofactor.

The enzyme catalyses hydrogencarbonate + L-glutamine + 2 ATP + H2O = carbamoyl phosphate + L-glutamate + 2 ADP + phosphate + 2 H(+). The catalysed reaction is hydrogencarbonate + NH4(+) + 2 ATP = carbamoyl phosphate + 2 ADP + phosphate + 2 H(+). Its pathway is amino-acid biosynthesis; L-arginine biosynthesis; carbamoyl phosphate from bicarbonate: step 1/1. It functions in the pathway pyrimidine metabolism; UMP biosynthesis via de novo pathway; (S)-dihydroorotate from bicarbonate: step 1/3. In terms of biological role, large subunit of the glutamine-dependent carbamoyl phosphate synthetase (CPSase). CPSase catalyzes the formation of carbamoyl phosphate from the ammonia moiety of glutamine, carbonate, and phosphate donated by ATP, constituting the first step of 2 biosynthetic pathways, one leading to arginine and/or urea and the other to pyrimidine nucleotides. The large subunit (synthetase) binds the substrates ammonia (free or transferred from glutamine from the small subunit), hydrogencarbonate and ATP and carries out an ATP-coupled ligase reaction, activating hydrogencarbonate by forming carboxy phosphate which reacts with ammonia to form carbamoyl phosphate. This is Carbamoyl phosphate synthase large chain from Streptococcus pneumoniae (strain ATCC 700669 / Spain 23F-1).